Consider the following 822-residue polypeptide: Adhesion G protein-coupled receptor E2 (822 aa).

An N-terminal signal peptide occupies residues 1-18; it reads MGGRVFLAFCVWLTLLGA. Residues 19–530 lie on the Extracellular side of the membrane; that stretch reads ETQDSRDCAR…DVQEEDPVLT (512 aa). The region spanning 22-63 is the EGF-like 1 domain; sequence DSRDCARWCPENSSCVNATACRCNPGFSSSSEIFTSPTEICD. Intrachain disulfides connect Cys-26-Cys-36, Cys-30-Cys-42, Cys-44-Cys-62, Cys-68-Cys-82, and Cys-76-Cys-91. N-linked (GlcNAc...) asparagine glycosylation is found at Asn-33 and Asn-38. Residues 64–103 enclose the EGF-like 1; calcium-binding domain; that stretch reads DINECVPPSKVSCGKSSDCRNTEGSYDCVCNPGYELVSGA. Asn-108 carries N-linked (GlcNAc...) asparagine glycosylation. Residues 116 to 159 enclose the EGF-like 2; calcium-binding domain; it reads DVDECQQNPRLCKSYGTCVNTLGSFTCQCLPGFKFKPEDPKLCT. 5 disulfide bridges follow: Cys-120-Cys-133, Cys-127-Cys-142, Cys-144-Cys-158, Cys-164-Cys-177, and Cys-171-Cys-186. Residues 160-198 form the EGF-like 3; calcium-binding domain; the sequence is DVNECTSGQNPCHSSTHCLNNVGSYQCRCRPGWQPIPGS. N-linked (GlcNAc...) asparagine glycosylation is found at Asn-203, Asn-222, Asn-351, Asn-371, Asn-427, Asn-449, and Asn-453. An EGF-like 4; calcium-binding domain is found at 209 to 247; it reads DVDECSSGLHQCDNSTVCFNTVGSYTCRCRPGWEPKHGI. Disulfide bonds link Cys-213/Cys-226 and Cys-220/Cys-235. The region spanning 351–523 is the GAIN-B domain; it reads NFSYPAGTEF…AVLMAPYDVQ (173 aa). 2 cysteine pairs are disulfide-bonded: Cys-475–Cys-505 and Cys-493–Cys-507. A GPS region spans residues 475 to 523; sequence CVFWEHGQNGCGHWATTGCSTMDTRDTSTICRCTHLSSFAVLMAPYDVQ. Residues 531–551 form a helical membrane-spanning segment; that stretch reads VITYMGLSLSLLCLLLAALTF. The Cytoplasmic segment spans residues 552–562; sequence LLCKAIQNIST. A helical transmembrane segment spans residues 563 to 583; it reads SLHLQLSLCLLLAHLLFLVAI. At 584-589 the chain is on the extracellular side; that stretch reads DRTEHE. The helical transmembrane segment at 590-610 threads the bilayer; the sequence is VLCAIIASALHYLYLAAFTWM. Residues 611–637 are Cytoplasmic-facing; that stretch reads LLEALYLFLTARNLMVVNYSSINRFTK. Residues 638 to 658 traverse the membrane as a helical segment; it reads KLMFPVAYGVPAVTVAISAAS. Over 659–676 the chain is Extracellular; sequence RPHLYGTPSRCWLQPEKG. A helical membrane pass occupies residues 677–697; sequence FIWGFLGPVCAIFSVNLALLL. Over 698–728 the chain is Cytoplasmic; that stretch reads VTLWILKNRLSSLNNEVSTLQNTRMLAFKAT. Residues 729–749 form a helical membrane-spanning segment; it reads AQLFILGCTWCLGILQVGPAA. The Extracellular portion of the chain corresponds to 750–753; the sequence is RVMA. Residues 754–774 form a helical membrane-spanning segment; the sequence is YLFTIINSLQGVFIFLVYCLL. The Cytoplasmic portion of the chain corresponds to 775–822; that stretch reads SQQVREQYRKWSKGFRKLRTESEMHTLSSSAKRDTPKPSTPGLLGLQS. Positions 797–822 are disordered; the sequence is EMHTLSSSAKRDTPKPSTPGLLGLQS.

Belongs to the G-protein coupled receptor 2 family. Adhesion G-protein coupled receptor (ADGR) subfamily. Forms a heterodimer, consisting of a large extracellular region non-covalently linked to a seven-transmembrane moiety. Interacts with chondroitin sulfate; the interaction with chondroitin sulfate is calcium-dependent. Interacts with CD55. Post-translationally, autoproteolytically cleaved into 2 subunits, an extracellular alpha subunit and a seven-transmembrane beta subunit.

Its subcellular location is the cell membrane. It is found in the cell projection. The protein resides in the ruffle membrane. In terms of biological role, cell surface receptor that binds to the chondroitin sulfate moiety of glycosaminoglycan chains and promotes cell attachment. Promotes granulocyte chemotaxis, degranulation and adhesion. In macrophages, promotes the release of inflammatory cytokines, including IL8 and TNF. Signals probably through G-proteins. The chain is Adhesion G protein-coupled receptor E2 (ADGRE2) from Macaca mulatta (Rhesus macaque).